The primary structure comprises 329 residues: Lipoyl synthase (329 aa).

[4Fe-4S] cluster is bound by residues cysteine 55, cysteine 60, cysteine 66, cysteine 81, cysteine 85, cysteine 88, and serine 292. A Radical SAM core domain is found at 67-281; sequence WEDREATFLI…RDEAEAIGFL (215 aa).

Belongs to the radical SAM superfamily. Lipoyl synthase family. Requires [4Fe-4S] cluster as cofactor.

The protein resides in the cytoplasm. It carries out the reaction [[Fe-S] cluster scaffold protein carrying a second [4Fe-4S](2+) cluster] + N(6)-octanoyl-L-lysyl-[protein] + 2 oxidized [2Fe-2S]-[ferredoxin] + 2 S-adenosyl-L-methionine + 4 H(+) = [[Fe-S] cluster scaffold protein] + N(6)-[(R)-dihydrolipoyl]-L-lysyl-[protein] + 4 Fe(3+) + 2 hydrogen sulfide + 2 5'-deoxyadenosine + 2 L-methionine + 2 reduced [2Fe-2S]-[ferredoxin]. It participates in protein modification; protein lipoylation via endogenous pathway; protein N(6)-(lipoyl)lysine from octanoyl-[acyl-carrier-protein]: step 2/2. In terms of biological role, catalyzes the radical-mediated insertion of two sulfur atoms into the C-6 and C-8 positions of the octanoyl moiety bound to the lipoyl domains of lipoate-dependent enzymes, thereby converting the octanoylated domains into lipoylated derivatives. This chain is Lipoyl synthase, found in Leifsonia xyli subsp. xyli (strain CTCB07).